A 144-amino-acid chain; its full sequence is MAAYLLAVAILFCIQGWPSGTVQGQVRPFLDVYERSACQTRETLVSILQEHPDEISDIFRPSCVAVLRCSGCCTDESMKCTPVGKHTADIQIMRMNPRTHSSKMEVMKFMEHTACECRPRWKQGEPEGPKEPRRGGVRAKFPFD.

The N-terminal stretch at 1-24 (MAAYLLAVAILFCIQGWPSGTVQG) is a signal peptide. At Q25 the chain carries Pyrrolidone carboxylic acid. 3 disulfide bridges follow: C38–C80, C69–C115, and C73–C117. Positions 120 to 134 (RWKQGEPEGPKEPRR) are enriched in basic and acidic residues. The disordered stretch occupies residues 120–144 (RWKQGEPEGPKEPRRGGVRAKFPFD). The propeptide occupies 134–144 (RGGVRAKFPFD).

The protein belongs to the PDGF/VEGF growth factor family. Snake venom VEGF subfamily. In terms of assembly, homodimer; disulfide-linked. Interacts with VEGF receptor-2 (KDR) with high affinity, but not with VEGF receptor-1 (Flt-1), VEGF receptor-3 (FLT4), and neuropilin-1 (NRP1). In terms of tissue distribution, expressed by the venom gland.

Its subcellular location is the secreted. Its function is as follows. Snake venom VEGFs may contribute to venom dispersion and prey subjugation by inducing vascular permeability and hypotension. This protein induces angiogenesis probably through VEGF receptor (KDR/VEGFR-2) signaling, as well as drastic hypotension. The hypotension is mediated by nitric oxide, which is produced by VEGF-activated endothelium NO synthase. May also induce vascular permeability. This is Snake venom vascular endothelial growth factor toxin VR-1 from Daboia russelii (Russel's viper).